We begin with the raw amino-acid sequence, 268 residues long: Small ribosomal subunit protein eS1 (268 aa).

The tract at residues Met-1–Val-21 is disordered.

This sequence belongs to the eukaryotic ribosomal protein eS1 family. Component of the small ribosomal subunit. Mature ribosomes consist of a small (40S) and a large (60S) subunit. The 40S subunit contains about 33 different proteins and 1 molecule of RNA (18S). The 60S subunit contains about 49 different proteins and 3 molecules of RNA (28S, 5.8S and 5S).

The protein localises to the cytoplasm. In terms of biological role, essential for oogenesis; required for late follicle cell development. The sequence is that of Small ribosomal subunit protein eS1 from Drosophila willistoni (Fruit fly).